Consider the following 1003-residue polypeptide: Leucine-rich repeat receptor-like serine/threonine-protein kinase BAM1 (1003 aa).

The signal sequence occupies residues 1 to 19; sequence MKLFLLLLFLLHISHTFTA. Residues 20–640 lie on the Extracellular side of the membrane; that stretch reads SRPISEFRAL…HSKGPLSASM (621 aa). 22 LRR repeats span residues 68 to 92, 93 to 116, 117 to 140, 142 to 165, 166 to 191, 193 to 213, 215 to 238, 239 to 262, 263 to 285, 286 to 310, 312 to 334, 335 to 358, 359 to 382, 385 to 406, 407 to 430, 432 to 454, 455 to 480, 482 to 502, 503 to 526, 527 to 550, 551 to 574, and 575 to 598; these read RRHV…VSHL, RLLQ…ISSL, SGLR…ISSG, VNLR…VTNL, TQLR…SWPV, EYLA…IGNL, TLRE…IGNL, SELV…IGKL, QKLD…ELGT, LSSL…FAEL, NLTL…IGDL, PELE…LGEN, GKLN…MCSG, LETL…LGKC, ESLT…LFGL, KLTQ…GGVS, VNLG…NFTG, QKLL…VGKL, QQLS…ISRC, KLLT…ITAM, KILN…ISSM, and QSLT…GQFS. N-linked (GlcNAc...) asparagine glycosylation is found at Asn-80, Asn-97, Asn-123, Asn-130, Asn-153, and Asn-164. Asn-212 and Asn-237 each carry an N-linked (GlcNAc...) asparagine glycan. N-linked (GlcNAc...) asparagine glycosylation is found at Asn-312 and Asn-346. Asn-420 is a glycosylation site (N-linked (GlcNAc...) asparagine). The N-linked (GlcNAc...) asparagine glycan is linked to Asn-477. Residues Asn-557, Asn-586, and Asn-601 are each glycosylated (N-linked (GlcNAc...) asparagine). A helical membrane pass occupies residues 641-661; that stretch reads KLLLVLGLLVCSIAFAVVAII. The Cytoplasmic segment spans residues 662-1003; it reads KARSLKKASE…VQSPPDLLNL (342 aa). Position 686 is a phosphothreonine (Thr-686). Residues 694-971 enclose the Protein kinase domain; that stretch reads LKEDNIIGKG…VQILTEIPKL (278 aa). ATP contacts are provided by residues 700 to 708 and Lys-722; that span reads IGKGGAGIV. 2 positions are modified to phosphotyrosine: Tyr-769 and Tyr-807. The active-site Proton acceptor is the Asp-820. Ser-855 carries the phosphoserine modification. A phosphotyrosine mark is found at Tyr-863 and Tyr-870. Phosphothreonine is present on Thr-871. Residues 969–1003 are disordered; that stretch reads PKLPPSKDQPMTESAPESELSPKSGVQSPPDLLNL. At Ser-996 the chain carries Phosphoserine.

This sequence belongs to the protein kinase superfamily. Ser/Thr protein kinase family. As to quaternary structure, self-interacts and interacts with BAM2 and CLV1. Binds to the CLV3, CLE5, CLE11, CLE18, CLE19, CLE22, CLE25, CLE26, CLE40, CLE41 and CLE42 mature peptides, probably via its extracellular leucine-rich repeat region. As to expression, expressed in seedlings, roots, leaves, inflorescences, flowers and siliques.

Its subcellular location is the cell membrane. The enzyme catalyses L-seryl-[protein] + ATP = O-phospho-L-seryl-[protein] + ADP + H(+). It carries out the reaction L-threonyl-[protein] + ATP = O-phospho-L-threonyl-[protein] + ADP + H(+). In terms of biological role, necessary for male gametophyte development, as well as ovule specification and function. Involved in cell-cell communication process required during early anther development, and regulating cell division and differentiation to organize cell layers. Required for the development of high-ordered vascular strands within the leaf and a correlated control of leaf shape, size and symmetry. May regulate the CLV1-dependent CLV3-mediated signaling in meristems maintenance. The sequence is that of Leucine-rich repeat receptor-like serine/threonine-protein kinase BAM1 (BAM1) from Arabidopsis thaliana (Mouse-ear cress).